Reading from the N-terminus, the 636-residue chain is DNA-directed RNA polymerase subunit beta' (636 aa).

The Zn(2+) site is built by C70, C72, C85, and C88. Mg(2+)-binding residues include D471, D473, and D475.

The protein belongs to the RNA polymerase beta' chain family. RpoC1 subfamily. Requires Mg(2+) as cofactor. Zn(2+) is required as a cofactor.

It localises to the plastid. The protein localises to the cyanelle. It carries out the reaction RNA(n) + a ribonucleoside 5'-triphosphate = RNA(n+1) + diphosphate. DNA-dependent RNA polymerase catalyzes the transcription of DNA into RNA using the four ribonucleoside triphosphates as substrates. The chain is DNA-directed RNA polymerase subunit beta' from Cyanophora paradoxa.